The following is a 186-amino-acid chain: Probable nicotinate-nucleotide adenylyltransferase (186 aa).

It belongs to the NadD family.

The enzyme catalyses nicotinate beta-D-ribonucleotide + ATP + H(+) = deamido-NAD(+) + diphosphate. The protein operates within cofactor biosynthesis; NAD(+) biosynthesis; deamido-NAD(+) from nicotinate D-ribonucleotide: step 1/1. In terms of biological role, catalyzes the reversible adenylation of nicotinate mononucleotide (NaMN) to nicotinic acid adenine dinucleotide (NaAD). The polypeptide is Probable nicotinate-nucleotide adenylyltransferase (Thermus thermophilus (strain ATCC 27634 / DSM 579 / HB8)).